The sequence spans 484 residues: D-aminoacylase (484 aa).

This sequence belongs to the metallo-dependent hydrolases superfamily. N-acyl-D-amino-acid deacylase family. Zn(2+) serves as cofactor.

Its subcellular location is the cytoplasm. The catalysed reaction is an N-acyl-D-amino acid + H2O = a D-alpha-amino acid + a carboxylate. In terms of biological role, has a wide specificity; hydrolyzes N-acyl derivative of neutral D-amino acids. The polypeptide is D-aminoacylase (dan) (Alcaligenes xylosoxydans xylosoxydans (Achromobacter xylosoxidans)).